The primary structure comprises 477 residues: Glycogen synthase (477 aa).

Lys15 lines the ADP-alpha-D-glucose pocket.

Belongs to the glycosyltransferase 1 family. Bacterial/plant glycogen synthase subfamily.

The enzyme catalyses [(1-&gt;4)-alpha-D-glucosyl](n) + ADP-alpha-D-glucose = [(1-&gt;4)-alpha-D-glucosyl](n+1) + ADP + H(+). It participates in glycan biosynthesis; glycogen biosynthesis. Its function is as follows. Synthesizes alpha-1,4-glucan chains using ADP-glucose. This Salmonella typhi protein is Glycogen synthase.